The following is a 417-amino-acid chain: MNTDIANQLRAAKKATTDLNLIQSDTRTIILETLAANLEKHIENIIQENQKDLSLMLEQDPRYDRLLLNKERILSLANDVRKVASLPNPLGVSLLEKSMPNGLSIKKITVPLGVIAVIYESRPNVTIDIFSLCFKSGNVCILKGGKEAHFTNSYLLLLIKNTLKNFNINTDIVCLLPPERALMTQLLNATGLVDLCIPRGSQNLINFVRDNAKIPVIETGAGIVHTYFDKSGDLGKGKKIINNAKTRRVSVCNALDTLIIHADRLKDLPELVETLSQKHVIIYADQDAYHVLDKNYPEQLLIKAKPQDFGHEFLDYKLAIKTVPNIKAAIGHIQQFSSHHSEAIIAEDESAIDQFLIEVDAAAVYANASTAFTDGGEFGLGAEIGISTQKVHARGPMGLEALTSYKWVIRGTGQIRD.

It belongs to the gamma-glutamyl phosphate reductase family.

Its subcellular location is the cytoplasm. It catalyses the reaction L-glutamate 5-semialdehyde + phosphate + NADP(+) = L-glutamyl 5-phosphate + NADPH + H(+). The protein operates within amino-acid biosynthesis; L-proline biosynthesis; L-glutamate 5-semialdehyde from L-glutamate: step 2/2. Catalyzes the NADPH-dependent reduction of L-glutamate 5-phosphate into L-glutamate 5-semialdehyde and phosphate. The product spontaneously undergoes cyclization to form 1-pyrroline-5-carboxylate. This chain is Gamma-glutamyl phosphate reductase, found in Legionella pneumophila (strain Lens).